The primary structure comprises 460 residues: NADH-ubiquinone oxidoreductase chain 4 (460 aa).

The next 12 membrane-spanning stretches (helical) occupy residues 20–42, 61–81, 93–113, 114–134, 148–168, 195–215, 225–245, 258–278, 285–304, 309–331, 351–371, and 394–414; these read PKWL…LTWL, PLST…VLAS, QRLY…AFGA, TEII…LIII, TYFL…LLLL, IWWA…GVHL, PVAG…YGMM, LAYP…SICL, SLIA…GILI, GFTG…FCLA, MIFP…LALP, and IILT…LFLM.

Belongs to the complex I subunit 4 family.

The protein resides in the mitochondrion membrane. The catalysed reaction is a ubiquinone + NADH + 5 H(+)(in) = a ubiquinol + NAD(+) + 4 H(+)(out). Its function is as follows. Core subunit of the mitochondrial membrane respiratory chain NADH dehydrogenase (Complex I) that is believed to belong to the minimal assembly required for catalysis. Complex I functions in the transfer of electrons from NADH to the respiratory chain. The immediate electron acceptor for the enzyme is believed to be ubiquinone. The polypeptide is NADH-ubiquinone oxidoreductase chain 4 (MT-ND4) (Formosania lacustris (Oriental stream loach)).